Reading from the N-terminus, the 535-residue chain is Calcium-dependent protein kinase 1 (535 aa).

The segment at 1 to 34 is disordered; sequence MGCNQSKSANDVRGNKVNNVNSKKKNNKREDIND. The N-myristoyl glycine moiety is linked to residue Gly2. Cys3 is lipidated: S-palmitoyl cysteine. The 268-residue stretch at 57 to 324 folds into the Protein kinase domain; the sequence is YFKVRKLGSG…AEEALNSRWI (268 aa). Residues 63-71 and Lys86 each bind ATP; that span reads LGSGAYGEV. At Ser65 the chain carries Phosphoserine. The residue at position 117 (Ser117) is a Phosphoserine. The active-site Proton acceptor is the Asp190. Ser216 and Ser219 each carry phosphoserine. Thr230 is modified (phosphothreonine). Ser334 bears the Phosphoserine mark. A J domain autoinhibitory motif motif is present at residues 345–352; that stretch reads NMRKFEGS. The segment at 345 to 363 is j domain; the sequence is NMRKFEGSQKLAQAAILFI. A J domain interacts with the EF-hand domains motif is present at residues 353 to 363; it reads QKLAQAAILFI. 4 EF-hand domains span residues 371-406, 415-450, 451-486, and 497-532; these read EERK…LRNF, NVEE…KQIL, FSEE…GFYF, and VSEK…ICDN. The Ca(2+) site is built by Asp384, Asn386, Asp388, Gln390, Glu395, Asp428, Asp430, Asn432, Tyr434, Glu439, Asp464, Asp466, Ser468, Lys470, Glu475, Asp510, Asn512, Asp514, Met516, and Glu521.

The protein belongs to the protein kinase superfamily. Ser/Thr protein kinase family. CDPK subfamily. In terms of assembly, monomer. The cofactor is Mg(2+). Myristoylated. Myristoylation and palmitoylation are required for the localization to the parasitophorous vacuole membrane. Post-translationally, palmitoylated. Palmitoylation increases in merozoites in response to low level of extracellular K(+) in the host blood. Myristoylation and palmitoylation are required for the localization to the parasitophorous vacuole membrane. In terms of processing, phosphorylation at Thr-230 may regulate CDPK1 kinase activity. Phosphorylation increases in response to an increase in intracellular Ca(2+) levels. Autophosphorylated in vitro. Autophosphorylation does not affect membrane localization in vitro.

Its subcellular location is the membrane. It localises to the cell membrane. The protein resides in the parasitophorous vacuole membrane. It is found in the cytoplasm. The protein localises to the cell projection. Its subcellular location is the cilium. It localises to the flagellum. The protein resides in the host cell membrane. It catalyses the reaction L-seryl-[protein] + ATP = O-phospho-L-seryl-[protein] + ADP + H(+). It carries out the reaction L-threonyl-[protein] + ATP = O-phospho-L-threonyl-[protein] + ADP + H(+). Its activity is regulated as follows. Activated by calcium. Upon calcium binding to the EF-hand domains, the C-terminus of the junction domain (J domain) undergoes a conformational change which results in the dissociation of the pseudo-substrate inhibitory motif from the catalytic domain. This, in turn may facilitate the autophosphorylation of the activation loop at Thr-230, which leads to the kinase activation. Functionally, calcium-dependent protein kinase which acts as a sensor and effector of intracellular Ca(2+) levels probably in part downstream of cGMP-activated PKG kinase. During the liver stage, involved in sporozoite motility and thus in sporozoite invasion of host hepatocytes, probably together with CDPK4 and CDPK5. In the mosquito midgut and during the last stage of male gamete exflagellation, may play a role in the rupture of the host erythrocyte membrane. In the mosquito midgut, required for the differentiation of the zygote into the ookinete by promoting the translational activation of a subset of repressed mRNAs; these mRNAs are kept repressed in the zygote by the DOZI- or CITH-containing mRNP complexes. Dispensable during the asexual blood stage. In Plasmodium yoelii yoelii, this protein is Calcium-dependent protein kinase 1.